The following is a 299-amino-acid chain: ATP phosphoribosyltransferase (299 aa).

Belongs to the ATP phosphoribosyltransferase family. Long subfamily. In terms of assembly, equilibrium between an active dimeric form, an inactive hexameric form and higher aggregates. Interconversion between the various forms is largely reversible and is influenced by the natural substrates and inhibitors of the enzyme. Requires Mg(2+) as cofactor.

It localises to the cytoplasm. It carries out the reaction 1-(5-phospho-beta-D-ribosyl)-ATP + diphosphate = 5-phospho-alpha-D-ribose 1-diphosphate + ATP. It participates in amino-acid biosynthesis; L-histidine biosynthesis; L-histidine from 5-phospho-alpha-D-ribose 1-diphosphate: step 1/9. With respect to regulation, feedback inhibited by histidine. Functionally, catalyzes the condensation of ATP and 5-phosphoribose 1-diphosphate to form N'-(5'-phosphoribosyl)-ATP (PR-ATP). Has a crucial role in the pathway because the rate of histidine biosynthesis seems to be controlled primarily by regulation of HisG enzymatic activity. In Pectobacterium atrosepticum (strain SCRI 1043 / ATCC BAA-672) (Erwinia carotovora subsp. atroseptica), this protein is ATP phosphoribosyltransferase.